The sequence spans 611 residues: Growth hormone receptor (611 aa).

The first 20 residues, 1–20, serve as a signal peptide directing secretion; it reads MDLRHLLLTLVLVCANDSLS. N-linked (GlcNAc...) asparagine glycosylation occurs at Asn-16. At 21–240 the chain is on the extracellular side; it reads ASDDVLRLPQ…EFVHCAEEIE (220 aa). Cys-34 and Cys-44 are joined by a disulfide. The N-linked (GlcNAc...) asparagine glycan is linked to Asn-53. Cys-75 and Cys-86 are oxidised to a cystine. The N-linked (GlcNAc...) asparagine glycan is linked to Asn-89. The cysteines at positions 100 and 114 are disulfide-linked. In terms of domain architecture, Fibronectin type-III spans 125–228; the sequence is PPVHLNWTLL…EILYVSFSQA (104 aa). Asn-130, Asn-135, and Asn-174 each carry an N-linked (GlcNAc...) asparagine glycan. Positions 214–218 match the WSXWS motif motif; it reads FGEFS. A helical membrane pass occupies residues 241-264; it reads FPWFLVVIFGACGLAVTVILILLS. The Cytoplasmic segment spans residues 265–611; sequence KQSRLKMLIF…STDQLNKIMP (347 aa). The tract at residues 270 to 355 is required for JAK2 binding; sequence KMLIFPPVPV…HLKSHSCLGA (86 aa). A Box 1 motif motif is present at residues 273 to 281; the sequence is IFPPVPVPK. Positions 316 to 325 match the UbE motif motif; that stretch reads DLWVEFIELD. The interval 411–455 is disordered; sequence SLPSLANTDTQQPRMSTRPENSQPWPPFADSIDAASPSAHNQLSN. Polar residues predominate over residues 414 to 433; the sequence is SLANTDTQQPRMSTRPENSQ.

The protein belongs to the type I cytokine receptor family. Type 1 subfamily. Post-translationally, the soluble form (GHBP) is produced by phorbol ester-promoted proteolytic cleavage at the cell surface (shedding) by ADAM17/TACE.

Its subcellular location is the cell membrane. The protein resides in the secreted. Its function is as follows. Receptor for pituitary gland growth hormone (GH1) involved in regulating postnatal body growth. On ligand binding, couples to the JAK2/STAT5 pathway. The soluble form (GHBP) acts as a reservoir of growth hormone in plasma and may be a modulator/inhibitor of GH signaling. The sequence is that of Growth hormone receptor (GHR) from Columba livia (Rock dove).